The chain runs to 610 residues: Autophagy-related protein 22-1 (610 aa).

The disordered stretch occupies residues 1–29 (MIFTSTPPAPPPADAQQRQPRYPGEDTTP). The chain crosses the membrane as a helical span at residues 41-61 (YGIAAEVFAVCGVGSFLPLTL). Asn-90 carries an N-linked (GlcNAc...) asparagine glycan. The next 3 helical transmembrane spans lie at 120–140 (SFAMYTFSLAVLVQALTLISF), 153–173 (LLLTFGLIGSVSSMLFVFISP), and 177–197 (ILGAILVVIGVTCLGSSFVVL). The disordered stretch occupies residues 216–242 (KTEGEELPHLDSSGEYTRSGSFNRGDN). Polar residues predominate over residues 229–239 (GEYTRSGSFNR). 4 helical membrane passes run 277-297 (GVGLGYCAAVLVQVLSILLLF), 310-330 (TLPLRFVLLLVGIWWFSFTVV), 379-399 (VVIFLIAWFLLSDAMATVSGT), and 415-435 (VGLLSITATLSGMTGAFLWPV). An N-linked (GlcNAc...) asparagine glycan is attached at Asn-445. Helical transmembrane passes span 450-470 (LCIALFEIIPLYGMLAYIPLV), 485-507 (FPLGIVHGLVSGGLSSYCRSFFG), 527-547 (KGSSFIGPAVVGVLIDATGQV), and 550-570 (GFFFIAVLIVLPIPLIWMVNA). The disordered stretch occupies residues 586 to 610 (KSHGENSSEFGHPSEEAEGLLARNP). Asn-591 carries N-linked (GlcNAc...) asparagine glycosylation.

Belongs to the ATG22 family.

It is found in the vacuole membrane. Functionally, vacuolar effluxer which mediate the efflux of amino acids resulting from autophagic degradation. The release of autophagic amino acids allows the maintenance of protein synthesis and viability during nitrogen starvation. The polypeptide is Autophagy-related protein 22-1 (atg22-1) (Aspergillus clavatus (strain ATCC 1007 / CBS 513.65 / DSM 816 / NCTC 3887 / NRRL 1 / QM 1276 / 107)).